The sequence spans 106 residues: Integration host factor subunit beta (106 aa).

Positions P57 to A106 are disordered. The segment covering T82 to L95 has biased composition (basic and acidic residues).

This sequence belongs to the bacterial histone-like protein family. In terms of assembly, heterodimer of an alpha and a beta chain.

In terms of biological role, this protein is one of the two subunits of integration host factor, a specific DNA-binding protein that functions in genetic recombination as well as in transcriptional and translational control. The chain is Integration host factor subunit beta from Afipia carboxidovorans (strain ATCC 49405 / DSM 1227 / KCTC 32145 / OM5) (Oligotropha carboxidovorans).